Consider the following 295-residue polypeptide: Ribosomal RNA small subunit methyltransferase H (295 aa).

S-adenosyl-L-methionine is bound by residues 35–37 (GGH), Glu-55, Phe-82, Asp-103, and Gln-110.

It belongs to the methyltransferase superfamily. RsmH family.

It is found in the cytoplasm. The catalysed reaction is cytidine(1402) in 16S rRNA + S-adenosyl-L-methionine = N(4)-methylcytidine(1402) in 16S rRNA + S-adenosyl-L-homocysteine + H(+). Its function is as follows. Specifically methylates the N4 position of cytidine in position 1402 (C1402) of 16S rRNA. This is Ribosomal RNA small subunit methyltransferase H from Desulfotalea psychrophila (strain LSv54 / DSM 12343).